The primary structure comprises 179 residues: Large ribosomal subunit protein uL5 (179 aa).

Belongs to the universal ribosomal protein uL5 family. In terms of assembly, part of the 50S ribosomal subunit; part of the 5S rRNA/L5/L18/L25 subcomplex. Contacts the 5S rRNA and the P site tRNA. Forms a bridge to the 30S subunit in the 70S ribosome.

In terms of biological role, this is one of the proteins that bind and probably mediate the attachment of the 5S RNA into the large ribosomal subunit, where it forms part of the central protuberance. In the 70S ribosome it contacts protein S13 of the 30S subunit (bridge B1b), connecting the 2 subunits; this bridge is implicated in subunit movement. Contacts the P site tRNA; the 5S rRNA and some of its associated proteins might help stabilize positioning of ribosome-bound tRNAs. This chain is Large ribosomal subunit protein uL5, found in Desulfatibacillum aliphaticivorans.